A 53-amino-acid polypeptide reads, in one-letter code: Lectin alpha chain (53 aa).

This sequence belongs to the leguminous lectin family. Tetramer of two alpha and two beta chains.

The sequence is that of Lectin alpha chain from Lathyrus clymenum (Spanish vetchling).